Reading from the N-terminus, the 589-residue chain is Splicing factor U2af large subunit B (589 aa).

Residues 1-195 (MMSYEGNGDG…KRRSGFDMAP (195 aa)) form a disordered region. Residues 14–27 (STENHNENYISLES) are compositionally biased toward polar residues. Basic and acidic residues-rich tracts occupy residues 29–100 (PFHE…DRQR) and 109–145 (RDRS…DREV). 2 stretches are compositionally biased toward basic residues: residues 146–156 (RHRRRSRSRSR) and 164–188 (RSEH…SKRR). RRM domains follow at residues 255–338 (RRVY…RPTD), 375–453 (DRIF…RAIQ), and 494–580 (QVVT…YPED).

The protein belongs to the splicing factor SR family. Component of the spliceosome. Interacts with SF1 in the nucleus.

It is found in the nucleus. It localises to the nucleus speckle. Necessary for the splicing of pre-mRNA. The sequence is that of Splicing factor U2af large subunit B from Arabidopsis thaliana (Mouse-ear cress).